We begin with the raw amino-acid sequence, 712 residues long: Anaerobic ribonucleoside-triphosphate reductase (712 aa).

The region spanning 3–92 (PHVMKRDGCK…EYRHDRDIQR (90 aa)) is the ATP-cone domain. A Glycine radical domain is found at 583–708 (KKVNPYDKID…VKRRVKHLGN (126 aa)). The Zn(2+) site is built by Cys-644, Cys-647, Cys-662, and Cys-665. Gly-681 carries the post-translational modification Glycine radical.

This sequence belongs to the anaerobic ribonucleoside-triphosphate reductase family. In terms of assembly, forms a tetramer composed of two NrdD and two NrdG subunits.

The catalysed reaction is a ribonucleoside 5'-triphosphate + formate + H(+) = a 2'-deoxyribonucleoside 5'-triphosphate + CO2 + H2O. Activated under anaerobic conditions by NrdG, a tightly associated activase. Activation involves the formation of a glycyl radical at Gly-681. In terms of biological role, catalyzes the conversion of ribonucleotides into deoxyribonucleotides, which are required for DNA synthesis and repair. This is Anaerobic ribonucleoside-triphosphate reductase (nrdD) from Salmonella typhimurium (strain LT2 / SGSC1412 / ATCC 700720).